A 278-amino-acid polypeptide reads, in one-letter code: Potassium/proton antiporter CemA (278 aa).

The next 4 membrane-spanning stretches (helical) occupy residues 61-81 (VVFLFIIPVLINQVSKSFLFG), 154-174 (CAITNILADLLSIAIFISILI), 203-223 (IILFTDMFVGFHSPHGWEVII), and 238-258 (FIFVFISTFPVILDTIFKYWI).

This sequence belongs to the CemA family.

It is found in the plastid. It localises to the chloroplast inner membrane. It catalyses the reaction K(+)(in) + H(+)(out) = K(+)(out) + H(+)(in). In terms of biological role, contributes to K(+)/H(+) antiport activity by supporting proton efflux to control proton extrusion and homeostasis in chloroplasts in a light-dependent manner to modulate photosynthesis. Prevents excessive induction of non-photochemical quenching (NPQ) under continuous-light conditions. Indirectly promotes efficient inorganic carbon uptake into chloroplasts. The protein is Potassium/proton antiporter CemA of Gracilaria tenuistipitata var. liui (Red alga).